The chain runs to 116 residues: Large ribosomal subunit protein bL19c (116 aa).

Belongs to the bacterial ribosomal protein bL19 family.

The protein localises to the plastid. It is found in the chloroplast. In Cyanidium caldarium (Red alga), this protein is Large ribosomal subunit protein bL19c.